The chain runs to 208 residues: Superoxide dismutase [Mn] 2 (208 aa).

Residues histidine 28, histidine 83, aspartate 165, and histidine 169 each coordinate Mn(2+).

It belongs to the iron/manganese superoxide dismutase family. In terms of assembly, homodimer. Requires Mn(2+) as cofactor.

It carries out the reaction 2 superoxide + 2 H(+) = H2O2 + O2. Destroys superoxide anion radicals which are normally produced within the cells and which are toxic to biological systems. The protein is Superoxide dismutase [Mn] 2 (sodA2) of Bacillus cereus (strain ATCC 14579 / DSM 31 / CCUG 7414 / JCM 2152 / NBRC 15305 / NCIMB 9373 / NCTC 2599 / NRRL B-3711).